Consider the following 276-residue polypeptide: Undecaprenyl-diphosphatase (276 aa).

8 consecutive transmembrane segments (helical) span residues 1 to 21 (MHWLEVVLLGVIQGLTEFLPV), 41 to 61 (LLLDICLHVGTLAAVLWVFFA), 97 to 117 (ALLIIIGTIPTGFIGMGFHKI), 121 to 141 (LFASPVLAGAMLLITGALLWA), 155 to 175 (VTWGNALTVGTIQGLAILPGI), 200 to 220 (FLLSIPAIVAALILEVADASA), 231 to 251 (LGGIVSAFTGLAALKWLLAIV), and 256 to 276 (LWWFAPYCWLVGATVLVANFV).

This sequence belongs to the UppP family.

The protein resides in the cell inner membrane. The catalysed reaction is di-trans,octa-cis-undecaprenyl diphosphate + H2O = di-trans,octa-cis-undecaprenyl phosphate + phosphate + H(+). Catalyzes the dephosphorylation of undecaprenyl diphosphate (UPP). Confers resistance to bacitracin. This is Undecaprenyl-diphosphatase from Desulfatibacillum aliphaticivorans.